The following is a 471-amino-acid chain: MSSPQNTSCPPSQHSLSFTQGLLLGQLSVVLLIGAFIKFFIFGESPSSSSRGISQRTAPRKRSYSVNSTLFRDAASRSLKESASSNVLRPVPSSSTNTKSILRKTYYNAIPTNFQKNSRHRLHHSTHQPESLDWFNVLIAQLIAQYRQTAYILKDSPTSSILDSLTETLNNVDKKPSWIDRINVTDISIGEEFPIFSNCRVIAVEDPNSDGGRLQALMDVDLSDDNLSLAIETNLLLNYPKPASAVLPVALSVSVVRFSGTLCISFVPSPGTTESSPHLPHPENQNESKPSRQDPEIPTNKDGVRSGIPKTSLAFSFLPDYRLDISVRSLIGSRSRLQDVPKVAQLVEARVQSWFEDRVVEPRVQLVALPGIWPRMGRTGVRAQEDHDAVSIDSEDPATKATHSGFTPVNANRDGLQASRDLNMEGLRYRRGNAGDEATTDEYERLTRGDTQSVGEQLRIPGSLPGAPAVA.

Residues 1–21 (MSSPQNTSCPPSQHSLSFTQG) are Lumenal-facing. Residues 22–42 (LLLGQLSVVLLIGAFIKFFIF) traverse the membrane as a helical segment. Topologically, residues 43–471 (GESPSSSSRG…GSLPGAPAVA (429 aa)) are cytoplasmic. Residues 128–370 (QPESLDWFNV…EPRVQLVALP (243 aa)) enclose the SMP-LTD domain. Disordered regions lie at residues 271–306 (GTTE…GVRS), 395–415 (EDPA…NRDG), and 448–471 (RGDT…PAVA). Residues 280–295 (PHPENQNESKPSRQDP) are compositionally biased toward basic and acidic residues. Residues 401–410 (ATHSGFTPVN) show a composition bias toward polar residues.

The protein belongs to the MMM1 family. Homodimer. Component of the ER-mitochondria encounter structure (ERMES) or MDM complex, composed of MMM1, MDM10, MDM12 and MDM34. An MMM1 homodimer associates with one molecule of MDM12 on each side in a pairwise head-to-tail manner, and the SMP-LTD domains of MMM1 and MDM12 generate a continuous hydrophobic tunnel for phospholipid trafficking.

It localises to the endoplasmic reticulum membrane. Functionally, component of the ERMES/MDM complex, which serves as a molecular tether to connect the endoplasmic reticulum (ER) and mitochondria. Components of this complex are involved in the control of mitochondrial shape and protein biogenesis, and function in nonvesicular lipid trafficking between the ER and mitochondria. The MDM12-MMM1 subcomplex functions in the major beta-barrel assembly pathway that is responsible for biogenesis of all outer membrane beta-barrel proteins, and acts in a late step after the SAM complex. The MDM10-MDM12-MMM1 subcomplex further acts in the TOM40-specific pathway after the action of the MDM12-MMM1 complex. Essential for establishing and maintaining the structure of mitochondria and maintenance of mtDNA nucleoids. The polypeptide is Maintenance of mitochondrial morphology protein 1 (Arthroderma otae (strain ATCC MYA-4605 / CBS 113480) (Microsporum canis)).